The chain runs to 227 residues: tRNA (guanine-N(1)-)-methyltransferase (227 aa).

Residues G112 and 132–137 (IGDFIL) contribute to the S-adenosyl-L-methionine site.

The protein belongs to the RNA methyltransferase TrmD family. In terms of assembly, homodimer.

The protein localises to the cytoplasm. The catalysed reaction is guanosine(37) in tRNA + S-adenosyl-L-methionine = N(1)-methylguanosine(37) in tRNA + S-adenosyl-L-homocysteine + H(+). In terms of biological role, specifically methylates guanosine-37 in various tRNAs. The protein is tRNA (guanine-N(1)-)-methyltransferase of Sulfurovum sp. (strain NBC37-1).